Reading from the N-terminus, the 527-residue chain is Estrogen receptor beta (527 aa).

The tract at residues 1-145 (MDVKNSPSSL…SPSSKRDAHF (145 aa)) is modulating. Serine 84 and serine 102 each carry phosphoserine; by MAPK. 2 consecutive NR C4-type zinc fingers follow at residues 146 to 166 (CAVC…CEGC) and 182 to 206 (CPAT…LRKC). Residues 146 to 211 (CAVCSDYASG…RLRKCYEVGM (66 aa)) constitute a DNA-binding region (nuclear receptor). In terms of domain architecture, NR LBD spans 261-495 (SPEQLVLTLL…DLLLEMLNAH (235 aa)). Residues 505–527 (TRSERNLAEDSESKEGSQKPQAQ) are disordered. Positions 506 to 521 (RSERNLAEDSESKEGS) are enriched in basic and acidic residues.

This sequence belongs to the nuclear hormone receptor family. NR3 subfamily. Binds DNA as a homodimer. Can form a heterodimer with ESR1. Interacts with NCOA1, NCOA3, NCOA5 and NCOA6 coactivators, leading to a strong increase of transcription of target genes. Interacts with UBE1C and AKAP13. Interacts with DNTTIP2. Interacts with CCDC62 in the presence of estradiol/E2; this interaction seems to enhance the transcription of target genes. Interacts with DNAAF4. Interacts with PRMT2. Interacts with CCAR2 (via N-terminus) in a ligand-independent manner. Interacts with RBM39, in the presence of estradiol (E2). Interacts with STUB1/CHIP. Post-translationally, phosphorylation at Ser-84 and Ser-102 recruits NCOA1.

Its subcellular location is the nucleus. Functionally, nuclear hormone receptor. Binds estrogens with an affinity similar to that of ESR1/ER-alpha, and activates expression of reporter genes containing estrogen response elements (ERE) in an estrogen-dependent manner. This is Estrogen receptor beta (ESR2) from Ovis aries (Sheep).